A 148-amino-acid chain; its full sequence is Large ribosomal subunit protein bL9 (148 aa).

This sequence belongs to the bacterial ribosomal protein bL9 family.

In terms of biological role, binds to the 23S rRNA. The chain is Large ribosomal subunit protein bL9 from Bacillus mycoides (strain KBAB4) (Bacillus weihenstephanensis).